The primary structure comprises 429 residues: MRGPELGPETSMEGDVLDTLEALGYKGPLLEEQALSKAAEGGLSSPEFSELCIWLGSQIKSLCNLEESITSAGRDDLESFQLEISGFLKEMACPYSVLVSGDIKERLTKKDDCLKLLLFLSTELQALQILQKKKHKNSQLDKNSEICQEVQAVCDALGVPKSDTSDIPLLLSQVESKVKDILCRVQKNHVGKPLLKVDLSSEQAEKLERINDALSCEYECRRRMLMKRLDVTVQSFGWSDRAKAKTDNIARIYQPKRYALSPKTTVTLAHLLAAREDLSKIIRTSSGISREKTACAINKVLMGRVPDRGGRPNEIEPPPPEMPPWQKRQEGGGRGGWGGGGGGRGGGGGGRGGWGGGGGWGGGGGSGGGWGGSGGGGGGRGGFQGRGDYGGRGDYGGRGGYGGRGGYGGRGYGDPYGGGGGGGGGYRRY.

The disordered stretch occupies residues 304 to 429; it reads RVPDRGGRPN…GGGGGGYRRY (126 aa). The span at 305–314 shows a compositional bias: basic and acidic residues; that stretch reads VPDRGGRPNE. The segment covering 332–429 has biased composition (gly residues); that stretch reads GGRGGWGGGG…GGGGGGYRRY (98 aa).

This sequence belongs to the FAM98 family. In terms of assembly, homodimer. Component of a tRNA-splicing ligase complex. Interacts with FAM98A.

The protein resides in the nucleus. Its subcellular location is the cytoplasm. In terms of biological role, positively stimulates PRMT1-induced protein arginine dimethylated arginine methylation. The protein is Protein FAM98B (Fam98b) of Mus musculus (Mouse).